The primary structure comprises 3999 residues: Hybrid PKS-NRPS synthetase xenE (3999 aa).

One can recognise a Ketosynthase family 3 (KS3) domain in the interval 13–449 (REPIAVVGSG…GTNAHCIIEN (437 aa)). Residues cysteine 186, histidine 325, and histidine 369 each act as for beta-ketoacyl synthase activity in the active site. The region spanning 562–879 (VFTGQGAQWP…TGLLNRGKDD (318 aa)) is the Malonyl-CoA:ACP transacylase (MAT) domain. Positions 949 to 1084 (NPLLGSRTTD…GRVIVITGET (136 aa)) are N-terminal hotdog fold. The 305-residue stretch at 949 to 1253 (NPLLGSRTTD…VVAFAEQTED (305 aa)) folds into the PKS/mFAS DH domain. A dehydratase (DH) domain region spans residues 950 to 1252 (PLLGSRTTDV…RVVAFAEQTE (303 aa)). Histidine 981 functions as the Proton acceptor; for dehydratase activity in the catalytic mechanism. The tract at residues 1099 to 1253 (LVDIPEDRFY…VVAFAEQTED (155 aa)) is C-terminal hotdog fold. Aspartate 1159 functions as the Proton donor; for dehydratase activity in the catalytic mechanism. The tract at residues 1298–1593 (YMKQLVTLFP…FSGADSPMPE (296 aa)) is methyltransferase (cMeT) domain. Residues 2133 to 2306 (TYVLFGLTSD…AASILHLGAV (174 aa)) form the Ketoreductase (KR) domain. A Carrier 1 domain is found at 2414-2495 (EEILEIVQDA…QLVEYAIGSM (82 aa)). Position 2455 is an O-(pantetheine 4'-phosphoryl)serine (serine 2455). The disordered stretch occupies residues 2501 to 2573 (PNRADSAKAS…EESPSESVND (73 aa)). Over residues 2526–2554 (SVSSSPSSLPKTSASGSSQQMSEGSSKTS) the composition is skewed to low complexity. The segment at 2580 to 3015 (EKVLPVSPGQ…EEVSLFTEQE (436 aa)) is condensation. The segment at 3045 to 3453 (AVHTDKVALK…RIEGDTQIKL (409 aa)) is adenylation. A Carrier 2 domain is found at 3562-3642 (RKLTDTESKL…AMAAAIQDTS (81 aa)). At serine 3602 the chain carries O-(pantetheine 4'-phosphoryl)serine. The segment at 3681–3900 (LTGATGFLGK…IDLITVEKAA (220 aa)) is reductase-like (R) domain (R).

This sequence in the C-terminal section; belongs to the NRP synthetase family.

It functions in the pathway mycotoxin biosynthesis. In terms of biological role, hybrid PKS-NRPS synthetase; part of the gene cluster that mediates the biosynthesis of xenoacremones such as xenoacremone A, a compound that shows inhibitory activity toward the PI3K/AKT signaling pathway and which has the ability to induce apoptosis of A549 lung cancer cells. Within the pathway, cooperation of the hybrid PKS-NRPS xenE and the trans-acting enoyl reductase xenG is responsible for the formation of the reduced tyrosine-nonaketide derivative. The PKS module of xenE acted in combination with the trans-acting enoyl reductase xenG to produce a double-methylated nonaketide attached to the ACP domain. In parallel, the adenylation (A) domain of the NRPS module activated L-tyrosine, which was then transferred to the ACP domain. The condensation (C) domain subsequently linked this group to the polyketide chain, forming an enzyme-bound amide. Reductive release by the C-terminal R domain afforded the aldehyde derivative. The alpha/beta hydrolase xenA then accelerates intramolecular nucleophilic attack to give a pyrrolidone derivative. Subsequently, three enzymes, xenF, xenD, and xenC, coordinately participate in the conversion to xenoacremone B. XenF catalyzes sigmatropic rearrangement to form an A-ring, which leads to an unusual intermediate with a hexane ring, which is required for the formation of the tricarbocyclic product. Epoxidation catalyzed by xenD and the formation of the paracyclophane ether catalyzed by xenC initiate a spontaneous intramolecular Diels-Alder (IMDA) reaction to yield xenoacremone B. Spontaneous hydration of xenoacremone B leads to the formation of xenoacremone A, which undergoes subsequent methylation to afford xenoacremone C. The protein is Hybrid PKS-NRPS synthetase xenE of Xenoacremonium sinensis (Endophyte fungus).